The primary structure comprises 652 residues: DNA ligase (652 aa).

NAD(+) is bound by residues 29–33, 78–79, and Glu107; these read DAEYD and SL. The active-site N6-AMP-lysine intermediate is Lys109. 4 residues coordinate NAD(+): Arg130, Glu164, Lys278, and Lys302. Positions 395, 398, 413, and 418 each coordinate Zn(2+). The BRCT domain occupies 577–652; the sequence is ADDAILSGKT…VKDEAWLLDL (76 aa).

Belongs to the NAD-dependent DNA ligase family. LigA subfamily. Requires Mg(2+) as cofactor. Mn(2+) serves as cofactor.

The catalysed reaction is NAD(+) + (deoxyribonucleotide)n-3'-hydroxyl + 5'-phospho-(deoxyribonucleotide)m = (deoxyribonucleotide)n+m + AMP + beta-nicotinamide D-nucleotide.. DNA ligase that catalyzes the formation of phosphodiester linkages between 5'-phosphoryl and 3'-hydroxyl groups in double-stranded DNA using NAD as a coenzyme and as the energy source for the reaction. It is essential for DNA replication and repair of damaged DNA. This Streptococcus thermophilus (strain CNRZ 1066) protein is DNA ligase.